The primary structure comprises 135 residues: uncharacterized protein (135 aa).

Residues 4-24 traverse the membrane as a helical segment; sequence LGVFLILASIVCGVVAICGCT.

Its subcellular location is the membrane. This is an uncharacterized protein from Methanocaldococcus jannaschii (strain ATCC 43067 / DSM 2661 / JAL-1 / JCM 10045 / NBRC 100440) (Methanococcus jannaschii).